The chain runs to 278 residues: NADPH-dependent 7-cyano-7-deazaguanine reductase (278 aa).

87-89 (IES) contacts substrate. 89–90 (SK) is an NADPH binding site. The active-site Thioimide intermediate is the C185. The Proton donor role is filled by D192. Residue 224 to 225 (HE) coordinates substrate. An NADPH-binding site is contributed by 253–254 (RG). Residues 255–278 (GLDINPYRSTNPTFSVQNHRSFRQ) are disordered. Residues 261–278 (YRSTNPTFSVQNHRSFRQ) show a composition bias toward polar residues.

This sequence belongs to the GTP cyclohydrolase I family. QueF type 2 subfamily. Homodimer.

It localises to the cytoplasm. The catalysed reaction is 7-aminomethyl-7-carbaguanine + 2 NADP(+) = 7-cyano-7-deazaguanine + 2 NADPH + 3 H(+). Its pathway is tRNA modification; tRNA-queuosine biosynthesis. Its function is as follows. Catalyzes the NADPH-dependent reduction of 7-cyano-7-deazaguanine (preQ0) to 7-aminomethyl-7-deazaguanine (preQ1). This chain is NADPH-dependent 7-cyano-7-deazaguanine reductase, found in Coxiella burnetii (strain CbuG_Q212) (Coxiella burnetii (strain Q212)).